Here is a 729-residue protein sequence, read N- to C-terminus: Phosphoribosylformylglycinamidine synthase subunit PurL (729 aa).

H54 is an active-site residue. Y57 and K96 together coordinate ATP. Residue E98 coordinates Mg(2+). Substrate contacts are provided by residues 99-102 and R121; that span reads SHNH. Residue H100 is the Proton acceptor of the active site. Residue D122 coordinates Mg(2+). Substrate is bound at residue Q245. D273 is a binding site for Mg(2+). Substrate is bound at residue 317-319; it reads ETQ. ATP-binding residues include D495 and G532. N533 is a Mg(2+) binding site. S535 is a substrate binding site.

Belongs to the FGAMS family. Monomer. Part of the FGAM synthase complex composed of 1 PurL, 1 PurQ and 2 PurS subunits.

It is found in the cytoplasm. The catalysed reaction is N(2)-formyl-N(1)-(5-phospho-beta-D-ribosyl)glycinamide + L-glutamine + ATP + H2O = 2-formamido-N(1)-(5-O-phospho-beta-D-ribosyl)acetamidine + L-glutamate + ADP + phosphate + H(+). The protein operates within purine metabolism; IMP biosynthesis via de novo pathway; 5-amino-1-(5-phospho-D-ribosyl)imidazole from N(2)-formyl-N(1)-(5-phospho-D-ribosyl)glycinamide: step 1/2. Functionally, part of the phosphoribosylformylglycinamidine synthase complex involved in the purines biosynthetic pathway. Catalyzes the ATP-dependent conversion of formylglycinamide ribonucleotide (FGAR) and glutamine to yield formylglycinamidine ribonucleotide (FGAM) and glutamate. The FGAM synthase complex is composed of three subunits. PurQ produces an ammonia molecule by converting glutamine to glutamate. PurL transfers the ammonia molecule to FGAR to form FGAM in an ATP-dependent manner. PurS interacts with PurQ and PurL and is thought to assist in the transfer of the ammonia molecule from PurQ to PurL. This chain is Phosphoribosylformylglycinamidine synthase subunit PurL, found in Staphylococcus haemolyticus (strain JCSC1435).